We begin with the raw amino-acid sequence, 372 residues long: Glutamate 5-kinase (372 aa).

Lysine 14 contributes to the ATP binding site. The substrate site is built by serine 54, aspartate 141, and asparagine 153. Residue 173–174 (TD) coordinates ATP. Residues 280-358 (RGHVVIDAGA…GEIETVLGYM (79 aa)) form the PUA domain.

This sequence belongs to the glutamate 5-kinase family.

The protein localises to the cytoplasm. It carries out the reaction L-glutamate + ATP = L-glutamyl 5-phosphate + ADP. Its pathway is amino-acid biosynthesis; L-proline biosynthesis; L-glutamate 5-semialdehyde from L-glutamate: step 1/2. Functionally, catalyzes the transfer of a phosphate group to glutamate to form L-glutamate 5-phosphate. This is Glutamate 5-kinase from Burkholderia mallei (strain NCTC 10229).